Here is a 105-residue protein sequence, read N- to C-terminus: Unclassified hydrophobin D (105 aa).

The N-terminal stretch at 1–18 (MKFYIVLLALAAFAMAEA) is a signal peptide. Intrachain disulfides connect cysteine 35–cysteine 86, cysteine 42–cysteine 83, and cysteine 43–cysteine 49.

The protein resides in the secreted. The protein localises to the cell wall. Its function is as follows. Aerial growth, conidiation, and dispersal of filamentous fungi in the environment rely upon a capability of their secreting small amphipathic proteins called hydrophobins (HPBs) with low sequence identity. Class I can self-assemble into an outermost layer of rodlet bundles on aerial cell surfaces, conferring cellular hydrophobicity that supports fungal growth, development and dispersal; whereas Class II form highly ordered films at water-air interfaces through intermolecular interactions but contribute nothing to the rodlet structure. In P.expansum, hydrophobins contribute to germination, tolerance to cold stress and mycotoxins patulin and citrinin production. The chain is Unclassified hydrophobin D from Penicillium expansum (Blue mold rot fungus).